The sequence spans 693 residues: Polyribonucleotide nucleotidyltransferase (693 aa).

Residues aspartate 489 and aspartate 495 each coordinate Mg(2+). One can recognise a KH domain in the interval 556 to 615; sequence PQIHVMNINPAKIKDVVGRGGATVKGIVEKTGAQIDTSDSGEVKVFAKDKKSMDMAVAMI. One can recognise an S1 motif domain in the interval 625–693; sequence GQVYKGKIVK…GRVKLSLVAR (69 aa).

The protein belongs to the polyribonucleotide nucleotidyltransferase family. Component of the RNA degradosome, which is a multiprotein complex involved in RNA processing and mRNA degradation. Mg(2+) is required as a cofactor.

It is found in the cytoplasm. It carries out the reaction RNA(n+1) + phosphate = RNA(n) + a ribonucleoside 5'-diphosphate. Functionally, involved in mRNA degradation. Catalyzes the phosphorolysis of single-stranded polyribonucleotides processively in the 3'- to 5'-direction. This Francisella tularensis subsp. mediasiatica (strain FSC147) protein is Polyribonucleotide nucleotidyltransferase.